The sequence spans 192 residues: GTP cyclohydrolase-2 (192 aa).

50–54 contacts GTP; that stretch reads RLHSE. Zn(2+)-binding residues include cysteine 55, cysteine 66, and cysteine 68. Residues 92-94 and threonine 114 contribute to the GTP site; that span reads EGR. Catalysis depends on aspartate 126, which acts as the Proton acceptor. The Nucleophile role is filled by arginine 128. GTP is bound by residues threonine 149 and lysine 154.

It belongs to the GTP cyclohydrolase II family. Zn(2+) is required as a cofactor.

It catalyses the reaction GTP + 4 H2O = 2,5-diamino-6-hydroxy-4-(5-phosphoribosylamino)-pyrimidine + formate + 2 phosphate + 3 H(+). It functions in the pathway cofactor biosynthesis; riboflavin biosynthesis; 5-amino-6-(D-ribitylamino)uracil from GTP: step 1/4. Catalyzes the conversion of GTP to 2,5-diamino-6-ribosylamino-4(3H)-pyrimidinone 5'-phosphate (DARP), formate and pyrophosphate. In Helicobacter pylori (strain J99 / ATCC 700824) (Campylobacter pylori J99), this protein is GTP cyclohydrolase-2.